A 337-amino-acid polypeptide reads, in one-letter code: Holliday junction branch migration complex subunit RuvB (337 aa).

Residues 4-184 form a large ATPase domain (RuvB-L) region; it reads QDRIISAELK…FGIVQRLEFY (181 aa). ATP-binding positions include Ile23, Arg24, Gly65, Lys68, Thr69, Thr70, 131–133, Arg174, Tyr184, and Arg221; that span reads EDY. Thr69 is a Mg(2+) binding site. The segment at 185-255 is small ATPAse domain (RuvB-S); that stretch reads DVESLTTIVA…VAQRALDMLS (71 aa). The head domain (RuvB-H) stretch occupies residues 258–337; the sequence is SQGFDHLDRR…FNYQLPSDFK (80 aa). 2 residues coordinate DNA: Arg313 and Arg318.

It belongs to the RuvB family. As to quaternary structure, homohexamer. Forms an RuvA(8)-RuvB(12)-Holliday junction (HJ) complex. HJ DNA is sandwiched between 2 RuvA tetramers; dsDNA enters through RuvA and exits via RuvB. An RuvB hexamer assembles on each DNA strand where it exits the tetramer. Each RuvB hexamer is contacted by two RuvA subunits (via domain III) on 2 adjacent RuvB subunits; this complex drives branch migration. In the full resolvosome a probable DNA-RuvA(4)-RuvB(12)-RuvC(2) complex forms which resolves the HJ.

The protein resides in the cytoplasm. The enzyme catalyses ATP + H2O = ADP + phosphate + H(+). The RuvA-RuvB-RuvC complex processes Holliday junction (HJ) DNA during genetic recombination and DNA repair, while the RuvA-RuvB complex plays an important role in the rescue of blocked DNA replication forks via replication fork reversal (RFR). RuvA specifically binds to HJ cruciform DNA, conferring on it an open structure. The RuvB hexamer acts as an ATP-dependent pump, pulling dsDNA into and through the RuvAB complex. RuvB forms 2 homohexamers on either side of HJ DNA bound by 1 or 2 RuvA tetramers; 4 subunits per hexamer contact DNA at a time. Coordinated motions by a converter formed by DNA-disengaged RuvB subunits stimulates ATP hydrolysis and nucleotide exchange. Immobilization of the converter enables RuvB to convert the ATP-contained energy into a lever motion, pulling 2 nucleotides of DNA out of the RuvA tetramer per ATP hydrolyzed, thus driving DNA branch migration. The RuvB motors rotate together with the DNA substrate, which together with the progressing nucleotide cycle form the mechanistic basis for DNA recombination by continuous HJ branch migration. Branch migration allows RuvC to scan DNA until it finds its consensus sequence, where it cleaves and resolves cruciform DNA. In Marinomonas sp. (strain MWYL1), this protein is Holliday junction branch migration complex subunit RuvB.